The following is a 442-amino-acid chain: MLVHTYSAMERPDGLGAAAGGARLSSLPQAAYGPAPPLCHTPAATAAAEFQPPYFPPPYPQPPLPYGQAPDAAAAFPHLAGDPYGGLAPLAQPQPPQAAWAAPRAAARAHEEPPGLLAPPARALGLDPRRDYATAVPRLLHGLADGAHGLADAPLGLPGLAAAPGLEDLQAMDEPGMSLLDQSVIKKVPIPSKASSLSALSLAKDSLVGGITNPGEVFCSVPGRLSLLSSTSKYKVTVGEVQRRLSPPECLNASLLGGVLRRAKSKNGGRCLRERLEKIGLNLPAGRRKAANVTLLTSLVEGEAVHLARDFGYVCETEFPAKAAAEYLCRQHADPGELHSRKSMLLAAKQICKEFADLMAQDRSPLGNSRPALILEPGVQSCLTHFSLITHGFGGPAICAALTAFQNYLLESLKGLDKMFLSSVGSGHGETKASEKDAKHRK.

The short motif at 54–59 (YFPPPY) is the PPxY motif element. Serine 246 bears the Phosphoserine; by PKA mark. The tract at residues 287-417 (RRKAANVTLL…YLLESLKGLD (131 aa)) is H-S-H (helix-span-helix), dimerization.

This sequence belongs to the AP-2 family. In terms of assembly, binds DNA as a dimer. Can form homodimers or heterodimers with other AP-2 family members. In terms of tissue distribution, expressed in skin, primary keratinocytes, immortalized keratinocytes, and HeLa cell line.

Its subcellular location is the nucleus. Sequence-specific DNA-binding protein that interacts with inducible viral and cellular enhancer elements to regulate transcription of selected genes. AP-2 factors bind to the consensus sequence 5'-GCCNNNGGC-3' and activate genes involved in a large spectrum of important biological functions including proper eye, face, body wall, limb and neural tube development. They also suppress a number of genes including MCAM/MUC18, C/EBP alpha and MYC. AP-2-epsilon may play a role in the development of the CNS and in cartilage differentiation. This chain is Transcription factor AP-2-epsilon, found in Homo sapiens (Human).